We begin with the raw amino-acid sequence, 249 residues long: 5'-nucleotidase SurE (249 aa).

A divalent metal cation contacts are provided by Asp-8, Asp-9, Ser-39, and Asn-91.

Belongs to the SurE nucleotidase family. The cofactor is a divalent metal cation.

The protein localises to the cytoplasm. The enzyme catalyses a ribonucleoside 5'-phosphate + H2O = a ribonucleoside + phosphate. Nucleotidase that shows phosphatase activity on nucleoside 5'-monophosphates. This is 5'-nucleotidase SurE from Pseudomonas aeruginosa (strain LESB58).